The sequence spans 602 residues: MDSLQDTVALDHGGCCPALSRLVPRGFGTEMWTLFALSGPLFLFQVLTFMIYIVSTVFCGHLGKVELASVTLAVAFVNVCGVSVGVGLSSACDTLMSQSFGSPNKKHVGVILQRGALVLLLCCLPCWALFLNTQHILLLFRQDPDVSRLTQDYVMIFIPGLPVIFLYNLLAKYLQNQGWLKGQEEESPFQTPGLSILHPSHSHLSRASFHLFQKITWPQVLSGVVGNCVNGVANYALVSVLNLGVRGSAYANIISQFAQTVFLLLYIVLKKLHLETWAGWSSQCLQDWGPFFSLAVPSMLMICVEWWAYEIGSFLMGLLSVVDLSAQAVIYEVATVTYMIPLGLSIGVCVRVGMALGAADTVQAKRSAVSGVLSIVGISLVLGTLISILKNQLGHIFTNDEDVIALVSQVLPVYSVFHVFEAICCVYGGVLRGTGKQAFGAAVNAITYYIIGLPLGILLTFVVRMRIMGLWLGMLACVFLATAAFVAYTARLDWKLAAEEAKKHSGRQQQQRAESTATRPGPEKAVLSSVATGSSPGITLTTYSRSECHVDFFRTPEEAHALSAPTSRLSVKQLVIRRGAALGAASATLMVGLTVRILATRH.

Topologically, residues 1–33 (MDSLQDTVALDHGGCCPALSRLVPRGFGTEMWT) are cytoplasmic. Residues 34-54 (LFALSGPLFLFQVLTFMIYIV) form a helical membrane-spanning segment. Over 55–66 (STVFCGHLGKVE) the chain is Extracellular. The chain crosses the membrane as a helical span at residues 67-87 (LASVTLAVAFVNVCGVSVGVG). Over 88-119 (LSSACDTLMSQSFGSPNKKHVGVILQRGALVL) the chain is Cytoplasmic. Residues 120 to 140 (LLCCLPCWALFLNTQHILLLF) form a helical membrane-spanning segment. Topologically, residues 141–153 (RQDPDVSRLTQDY) are extracellular. The chain crosses the membrane as a helical span at residues 154 to 174 (VMIFIPGLPVIFLYNLLAKYL). At 175–219 (QNQGWLKGQEEESPFQTPGLSILHPSHSHLSRASFHLFQKITWPQ) the chain is on the cytoplasmic side. Residues 220–240 (VLSGVVGNCVNGVANYALVSV) form a helical membrane-spanning segment. Topologically, residues 241 to 248 (LNLGVRGS) are extracellular. The chain crosses the membrane as a helical span at residues 249–269 (AYANIISQFAQTVFLLLYIVL). Over 270–289 (KKLHLETWAGWSSQCLQDWG) the chain is Cytoplasmic. A helical transmembrane segment spans residues 290-309 (PFFSLAVPSMLMICVEWWAY). Topologically, residues 310–327 (EIGSFLMGLLSVVDLSAQ) are extracellular. Residues 328–348 (AVIYEVATVTYMIPLGLSIGV) form a helical membrane-spanning segment. The Cytoplasmic portion of the chain corresponds to 349 to 368 (CVRVGMALGAADTVQAKRSA). Residues 369 to 389 (VSGVLSIVGISLVLGTLISIL) traverse the membrane as a helical segment. The Extracellular portion of the chain corresponds to 390-402 (KNQLGHIFTNDED). The helical transmembrane segment at 403–423 (VIALVSQVLPVYSVFHVFEAI) threads the bilayer. The Cytoplasmic portion of the chain corresponds to 424 to 442 (CCVYGGVLRGTGKQAFGAA). The chain crosses the membrane as a helical span at residues 443 to 463 (VNAITYYIIGLPLGILLTFVV). The Extracellular portion of the chain corresponds to 464–466 (RMR). Residues 467–487 (IMGLWLGMLACVFLATAAFVA) traverse the membrane as a helical segment. Residues 488–578 (YTARLDWKLA…LSVKQLVIRR (91 aa)) lie on the Cytoplasmic side of the membrane. Positions 503–529 (KHSGRQQQQRAESTATRPGPEKAVLSS) are disordered. Residues 507–518 (RQQQQRAESTAT) are compositionally biased toward polar residues. A helical membrane pass occupies residues 579–599 (GAALGAASATLMVGLTVRILA). At 600-602 (TRH) the chain is on the extracellular side.

It belongs to the multi antimicrobial extrusion (MATE) (TC 2.A.66.1) family. In terms of tissue distribution, high expression in kidney. Very small expression in adrenal gland and lung. High expression in kidney. Very small expression in brain and testis. As to expression, ubiquitously expressed in all tissues examined except the kidney.

The protein resides in the cell membrane. It localises to the apical cell membrane. It catalyses the reaction thiamine(out) + H(+)(in) = thiamine(in) + H(+)(out). The enzyme catalyses estrone 3-sulfate(in) + H(+)(out) = estrone 3-sulfate(out) + H(+)(in). It carries out the reaction creatinine(in) + H(+)(out) = creatinine(out) + H(+)(in). In terms of biological role, multidrug efflux pump that functions as a H(+)/organic cation antiporter. Mediates the efflux of cationic compounds, such as the model cations, tetraethylammonium (TEA) and 1-methyl-4-phenylpyridinium (MPP+), the platinum-based drug oxaliplatin or weak bases that are positively charged at physiological pH, cimetidine, the platinum-based drugs cisplatin and oxaliplatin or the antidiabetic drug metformin. Mediates the efflux of endogenous compounds such as, creatinine, thiamine and estrone-3-sulfate. Plays a physiological role in the excretion of drugs, toxins and endogenous metabolites through the kidney. Non-functional protein. The polypeptide is Multidrug and toxin extrusion protein 2 (Homo sapiens (Human)).